The chain runs to 460 residues: Argininosuccinate lyase (460 aa).

This sequence belongs to the lyase 1 family. Argininosuccinate lyase subfamily.

It localises to the cytoplasm. The catalysed reaction is 2-(N(omega)-L-arginino)succinate = fumarate + L-arginine. Its pathway is amino-acid biosynthesis; L-arginine biosynthesis; L-arginine from L-ornithine and carbamoyl phosphate: step 3/3. This chain is Argininosuccinate lyase, found in Rhodopirellula baltica (strain DSM 10527 / NCIMB 13988 / SH1).